The primary structure comprises 261 residues: MFELIYPGWLAGILLSFATGPLGSFIIWRRISSFGDTLSHSSILGLAISILFQIDSFYTELFFMSFLAIILVWMEQLLSVSLETILSIISHSSLSLGIICISLMSTSHHIDLSNYLFGDLLLVTVFDLCIIALGSLIVLTILFFRWNSILLLTVNEELAQIDGVNIFYARLTLMLTTAICISIAIKFVGVLLITSLLIIPPATAQIFSNSPEKTIGFSILISIISVTGGIFLSFFYNVPTSPSIVLFSSCVYLLSNIKKLI.

Transmembrane regions (helical) follow at residues 8 to 28 (GWLA…FIIW), 54 to 74 (IDSF…LVWM), 84 to 104 (TILS…ISLM), 129 to 149 (CIIA…WNSI), 179 to 199 (ICIS…LLII), 215 to 235 (IGFS…LSFF), and 238 to 254 (VPTS…VYLL).

The protein belongs to the ABC-3 integral membrane protein family.

It localises to the cell membrane. Functionally, involved in the high-affinity zinc uptake transport system. The polypeptide is High-affinity zinc uptake system membrane protein ZnuB (znuB) (Buchnera aphidicola subsp. Schizaphis graminum (strain Sg)).